The primary structure comprises 463 residues: O-phospho-L-seryl-tRNA:Cys-tRNA synthase 2 (463 aa).

Pyridoxal 5'-phosphate is bound by residues 154 to 155 (AR), Asn259, and 282 to 284 (SGH). Lys285 bears the N6-(pyridoxal phosphate)lysine mark.

It belongs to the SepCysS family. As to quaternary structure, homodimer. Interacts with SepRS. It depends on pyridoxal 5'-phosphate as a cofactor.

It carries out the reaction O-phospho-L-seryl-tRNA(Cys) + hydrogen sulfide + H(+) = L-cysteinyl-tRNA(Cys) + phosphate. In terms of biological role, converts O-phospho-L-seryl-tRNA(Cys) (Sep-tRNA(Cys)) to L-cysteinyl-tRNA(Cys) (Cys-tRNA(Cys)). The protein is O-phospho-L-seryl-tRNA:Cys-tRNA synthase 2 of Methanocella arvoryzae (strain DSM 22066 / NBRC 105507 / MRE50).